The chain runs to 807 residues: Protein WEAK CHLOROPLAST MOVEMENT UNDER BLUE LIGHT 1 (807 aa).

Residues 1 to 162 (MEDLKTVEAS…GTPKNVDSHR (162 aa)) are disordered. Positions 31–40 (RESNIQSATK) are enriched in polar residues. The segment covering 46–73 (QSQTDTEETQQSQTDTEETQQSQTDDTT) has biased composition (low complexity). Residues 138–157 (RTVSSPRFSGSPVSTGTPKN) are compositionally biased toward polar residues. Ser148 carries the phosphoserine modification. 4 coiled-coil regions span residues 191–429 (RMQA…ELVA), 457–489 (DLHA…LKLA), 516–621 (IAVA…ALEE), and 664–724 (AAVS…WRAE). Disordered regions lie at residues 532–565 (IASV…EAKS) and 722–789 (RAEH…KKKK). Composition is skewed to basic and acidic residues over residues 537 to 548 (SKEKDAREKMVE), 722 to 732 (RAEHEQKRKAG), and 739 to 749 (KNLKESFEGGK). A compositionally biased stretch (polar residues) spans 761–781 (SSPSESYGTEENSETNLSPQT).

This sequence belongs to the WEB family. In terms of assembly, interacts with PMI2. As to expression, ubiquitous but preferentially in chloroplast-containing tissues.

It localises to the cytoplasm. Its function is as follows. Required for the chloroplast avoidance response under high intensity blue light. This avoidance response consists in the relocation of chloroplasts on the anticlinal side of exposed cells. Acts in association with PMI2 to maintain the velocity of chloroplast photorelocation movement via cp-actin filaments regulation. The polypeptide is Protein WEAK CHLOROPLAST MOVEMENT UNDER BLUE LIGHT 1 (WEB1) (Arabidopsis thaliana (Mouse-ear cress)).